A 315-amino-acid polypeptide reads, in one-letter code: Ribosomal RNA small subunit methyltransferase H (315 aa).

S-adenosyl-L-methionine is bound by residues 36 to 38 (GGH), D56, F80, D102, and Q109.

Belongs to the methyltransferase superfamily. RsmH family.

The protein resides in the cytoplasm. The enzyme catalyses cytidine(1402) in 16S rRNA + S-adenosyl-L-methionine = N(4)-methylcytidine(1402) in 16S rRNA + S-adenosyl-L-homocysteine + H(+). In terms of biological role, specifically methylates the N4 position of cytidine in position 1402 (C1402) of 16S rRNA. The sequence is that of Ribosomal RNA small subunit methyltransferase H from Proteus mirabilis (strain HI4320).